A 416-amino-acid polypeptide reads, in one-letter code: POC1 centriolar protein homolog A (416 aa).

7 WD repeats span residues 16-55, 58-97, 100-139, 142-181, 184-223, 226-265, and 268-307; these read GHRDAITSLDFSPSGKQIASGSVDASVMVWNMKPQSRAYR, GHKDAVTCVQFSPSAHLLASSSRDKTVRLWVPSVKGESVL, AHTGSVRSVCFSADGQSLLTASDDQSIKLWSVHRQKIICT, EHNNWVRCARFSPDGQLMVSVSDDRTVKLWDASSRQLIHT, EPGGYSSYVDFHPSSTCIATASSDNTVRVWDIRTHTLLQH, VHSAAVNALSFHPSGNHLLTASSDSTLKILDLLEGRLLYT, and GHQGSASCVSFSRSGDQFASAGSDQQVMVWRTNFDSVDYS. The interval 311–340 is disordered; it reads QQKRDHRTPSAQASGAAGDPESRSGQKTEV. Residues 380-412 are a coiled coil; that stretch reads QLDVLTQTVAILEQRLTLTEDKLKECLEQQHQA.

This sequence belongs to the WD repeat POC1 family.

In terms of biological role, may play an important role in centriole assembly and/or stability and ciliogenesis. The chain is POC1 centriolar protein homolog A from Danio rerio (Zebrafish).